We begin with the raw amino-acid sequence, 314 residues long: MTYFQIECVESKTESNRQQYGRFILEPLNKGQGITLGNSLRRTILSDLQGAAIVAVRIAGINHEFSTITGVREDVLEILLNLKKVVLKSHSDTPQIGRIRLQGPAIITTGLFEVPPEILIIDPQQYIATICNNTIFEMEFRIEKGSGYKLVNKGFDKKSIDFLQIDAVFMPVTKFNYTVEEKKISPILIQEKLFLEVWTNGSLSPQEAISEGAQVLHSLFYPLTNLNFQNANNTDNEYEEEINQVLIEELQLSVRAYNCLKRAQINSISDLLDYSQDELLEIKNFGQKSAEEVIEALQNKLGIRLPKEKNIQNT.

Residues 1-227 form an alpha N-terminal domain (alpha-NTD) region; sequence MTYFQIECVE…SLFYPLTNLN (227 aa). The tract at residues 239–314 is alpha C-terminal domain (alpha-CTD); sequence EEEINQVLIE…LPKEKNIQNT (76 aa).

It belongs to the RNA polymerase alpha chain family. In plastids the minimal PEP RNA polymerase catalytic core is composed of four subunits: alpha, beta, beta', and beta''. When a (nuclear-encoded) sigma factor is associated with the core the holoenzyme is formed, which can initiate transcription.

It localises to the plastid. Its subcellular location is the chloroplast. It catalyses the reaction RNA(n) + a ribonucleoside 5'-triphosphate = RNA(n+1) + diphosphate. Functionally, DNA-dependent RNA polymerase catalyzes the transcription of DNA into RNA using the four ribonucleoside triphosphates as substrates. This is DNA-directed RNA polymerase subunit alpha from Gracilaria tenuistipitata var. liui (Red alga).